Here is a 128-residue protein sequence, read N- to C-terminus: Small ribosomal subunit protein uS12 (128 aa).

3-methylthioaspartic acid is present on Asp-89.

Belongs to the universal ribosomal protein uS12 family. As to quaternary structure, part of the 30S ribosomal subunit. Contacts proteins S8 and S17. May interact with IF1 in the 30S initiation complex.

In terms of biological role, with S4 and S5 plays an important role in translational accuracy. Functionally, interacts with and stabilizes bases of the 16S rRNA that are involved in tRNA selection in the A site and with the mRNA backbone. Located at the interface of the 30S and 50S subunits, it traverses the body of the 30S subunit contacting proteins on the other side and probably holding the rRNA structure together. The combined cluster of proteins S8, S12 and S17 appears to hold together the shoulder and platform of the 30S subunit. In Campylobacter jejuni subsp. jejuni serotype O:6 (strain 81116 / NCTC 11828), this protein is Small ribosomal subunit protein uS12.